The following is a 169-amino-acid chain: MSALLKPLDNRLFWPAVAIGGLLILAFVLYLQHVRGFAPCSLCIFIRLDVLGLVLAGIVGSLAPRSRIAGGIAALGMLAASLGGIYHAWSLVAEEKLAAQGMGSCKMFMGFPEWIPLDTWLPQVFQPEGLCGEVVWTLLGQSMAVWSLALFVFCLLVLAAKLAFGRRTA.

Residues 1-13 (MSALLKPLDNRLF) are Cytoplasmic-facing. A helical membrane pass occupies residues 14 to 30 (WPAVAIGGLLILAFVLY). The Periplasmic segment spans residues 31–48 (LQHVRGFAPCSLCIFIRL). Residues cysteine 40 and cysteine 43 are joined by a disulfide bond. A helical transmembrane segment spans residues 49-64 (DVLGLVLAGIVGSLAP). Residues 65–71 (RSRIAGG) are Cytoplasmic-facing. A helical membrane pass occupies residues 72–89 (IAALGMLAASLGGIYHAW). At 90–145 (SLVAEEKLAAQGMGSCKMFMGFPEWIPLDTWLPQVFQPEGLCGEVVWTLLGQSMAV) the chain is on the periplasmic side. Cysteine 105 and cysteine 131 are joined by a disulfide. The chain crosses the membrane as a helical span at residues 146–164 (WSLALFVFCLLVLAAKLAF). Over 165 to 169 (GRRTA) the chain is Cytoplasmic.

This sequence belongs to the DsbB family.

It localises to the cell inner membrane. Its function is as follows. Required for disulfide bond formation in some periplasmic proteins. Acts by oxidizing the DsbA protein. The chain is Disulfide bond formation protein B 1 from Pseudomonas aeruginosa (strain UCBPP-PA14).